A 790-amino-acid chain; its full sequence is Chorion peroxidase (790 aa).

The signal sequence occupies residues 1–16; the sequence is MAKKVLLLSLYSAVLS. A propeptide spanning residues 17 to 209 is cleaved from the precursor; that stretch reads TWFGFGYVQC…ARIPRAIRKR (193 aa). C210 carries the N-acetylcysteine; in Chorion peroxidase light chain modification. C216 and C229 are joined by a disulfide. Residue W259 is glycosylated (N-linked (Man) tryptophan). H305 (proton acceptor) is an active-site residue. N327 is a glycosylation site (N-linked (GlcNAc...) asparagine). Y353 bears the 3',4'-dihydroxyphenylalanine mark. The cysteines at positions 433 and 440 are disulfide-linked. W479 carries an N-linked (Man) tryptophan glycan. Position 551 (H551) interacts with heme b. W680 carries an N-linked (Man) tryptophan glycan. A disulfide bond links C746 and C774. A glycan (N-linked (Man) tryptophan) is linked at W785.

This sequence belongs to the peroxidase family. XPO subfamily. In terms of assembly, heterodimer. The cofactor is heme b. N-glycosylated on Trp by mannose and on Asn by N-acetylglucosamine. In terms of processing, there is a hexose glycosylation of an unidentified residue between 654 and 708; Trp-680 is conserved in closely related species and is probably mannosylated.

It is found in the secreted. It carries out the reaction 2 a phenolic donor + H2O2 = 2 a phenolic radical donor + 2 H2O. Its activity is regulated as follows. Extremely resistant to denaturating agents, such as SDS and organic solvents. In terms of biological role, involved in the formation of a rigid and insoluble egg chorion by catalyzing chorion protein cross-linking through dityrosine formation and phenol oxidase-catalyzed chorion melanization. The sequence is that of Chorion peroxidase (pxt) from Aedes aegypti (Yellowfever mosquito).